Here is a 116-residue protein sequence, read N- to C-terminus: Large ribosomal subunit protein uL18 (116 aa).

It belongs to the universal ribosomal protein uL18 family. In terms of assembly, part of the 50S ribosomal subunit; part of the 5S rRNA/L5/L18/L25 subcomplex. Contacts the 5S and 23S rRNAs.

Functionally, this is one of the proteins that bind and probably mediate the attachment of the 5S RNA into the large ribosomal subunit, where it forms part of the central protuberance. In Pseudomonas aeruginosa (strain UCBPP-PA14), this protein is Large ribosomal subunit protein uL18.